The primary structure comprises 205 residues: MLVCGVDEAGRGSLVGPLVIAGVAIKRNRMRELKSMGVRDSKKLTRKARESLYPEIVNMADSYHISRVPPGVVDRSVGRHMLNDLEARYMARVITRLGHGTTYVDSCDVNPRRFGGRVSEMSGRTVRSYHRADDRFVIVSAASILAKVARDRSIERLRKSHDVGSGYPSDRRTVGFVRGYYNKNGAMPPFVRRSWRPARLIEAGG.

The 205-residue stretch at 1-205 folds into the RNase H type-2 domain; sequence MLVCGVDEAG…RPARLIEAGG (205 aa). The a divalent metal cation site is built by Asp-7, Glu-8, and Asp-105.

Belongs to the RNase HII family. Requires Mn(2+) as cofactor. Mg(2+) is required as a cofactor.

The protein resides in the cytoplasm. The catalysed reaction is Endonucleolytic cleavage to 5'-phosphomonoester.. Its function is as follows. Endonuclease that specifically degrades the RNA of RNA-DNA hybrids. This chain is Ribonuclease HII, found in Cenarchaeum symbiosum (strain A).